The following is a 222-amino-acid chain: UPF0316 protein Mboo_0791 (222 aa).

3 consecutive transmembrane segments (helical) span residues 25–45, 67–87, and 93–113; these read FFLF…IFLA, LAPV…VGVL, and IAYF…GLVI.

It belongs to the UPF0316 family.

It localises to the cell membrane. The polypeptide is UPF0316 protein Mboo_0791 (Methanoregula boonei (strain DSM 21154 / JCM 14090 / 6A8)).